The sequence spans 156 residues: Small ribosomal subunit protein uS7c (156 aa).

This sequence belongs to the universal ribosomal protein uS7 family. Part of the 30S ribosomal subunit.

Its subcellular location is the plastid. It localises to the chloroplast. Its function is as follows. One of the primary rRNA binding proteins, it binds directly to 16S rRNA where it nucleates assembly of the head domain of the 30S subunit. The protein is Small ribosomal subunit protein uS7c (rps7) of Gracilaria tenuistipitata var. liui (Red alga).